Here is a 154-residue protein sequence, read N- to C-terminus: Ribosome maturation factor RimP (154 aa).

The protein belongs to the RimP family.

Its subcellular location is the cytoplasm. Required for maturation of 30S ribosomal subunits. This is Ribosome maturation factor RimP from Heliobacterium modesticaldum (strain ATCC 51547 / Ice1).